Here is a 580-residue protein sequence, read N- to C-terminus: Glypican-3 (580 aa).

The signal sequence occupies residues 1–24 (MAGTVRTACLVVAMLLSLDFPGQA). Glutamine 25 carries the post-translational modification Pyrrolidone carboxylic acid. Cystine bridges form between cysteine 35–cysteine 72, cysteine 65–cysteine 262, cysteine 73–cysteine 265, cysteine 197–cysteine 349, cysteine 252–cysteine 285, cysteine 274–cysteine 422, and cysteine 278–cysteine 410. N-linked (GlcNAc...) asparagine glycans are attached at residues asparagine 124 and asparagine 241. Serine 352 bears the Phosphoserine; by FAM20C mark. The N-linked (GlcNAc...) asparagine glycan is linked to asparagine 418. Serine 495 and serine 509 each carry an O-linked (Xyl...) (glycosaminoglycan) serine glycan. A lipid anchor (GPI-anchor amidated asparagine) is attached at asparagine 554. Positions 555-580 (LGNVHSPLKLLTSMAISVVCFFFLVH) are cleaved as a propeptide — removed in mature form.

It belongs to the glypican family. Heterodimer; disulfide-linked. Cleavage by a furin-like convertase results in production of alpha and beta chains which form a disulfide-linked heterodimer. Interacts with DPP4. Interacts with FGF2. Interacts with WNT5A. Also interacts with WNT3A and WNT7B. Interacts with hedgehog protein SHH; the heparan sulfate chains are not required for the interaction. Also interacts with hedgehog protein IHH. Interacts with CD81. Interacts with Wnt receptors FZD4, FZD7 and FZD8; the heparan sulfate chains are required for the interaction. Post-translationally, O-glycosylated; contains heparan sulfate and/or chondroitin sulfate. In terms of processing, cleaved intracellularly by a furin-like convertase to generate 2 subunits, alpha and beta, which remain associated through disulfide bonds and are associated with the cell surface via the GPI-anchor. This processing is essential for its role in inhibition of hedgehog signaling. A second proteolytic event may result in cleavage of the protein on the cell surface, separating it from the GPI-anchor and leading to its shedding from the cell surface. In terms of tissue distribution, detected in placenta (at protein level). Highly expressed in lung, liver and kidney.

Its subcellular location is the cell membrane. Cell surface proteoglycan. Negatively regulates the hedgehog signaling pathway when attached via the GPI-anchor to the cell surface by competing with the hedgehog receptor PTC1 for binding to hedgehog proteins. Binding to the hedgehog protein SHH triggers internalization of the complex by endocytosis and its subsequent lysosomal degradation. Positively regulates the canonical Wnt signaling pathway by binding to the Wnt receptor Frizzled and stimulating the binding of the Frizzled receptor to Wnt ligands. Positively regulates the non-canonical Wnt signaling pathway. Binds to CD81 which decreases the availability of free CD81 for binding to the transcriptional repressor HHEX, resulting in nuclear translocation of HHEX and transcriptional repression. Inhibits the dipeptidyl peptidase activity of DPP4. Plays a role in limb patterning and skeletal development by controlling the cellular response to BMP4. Modulates the effects of growth factors BMP2, BMP7 and FGF7 on renal branching morphogenesis. Required for coronary vascular development. Plays a role in regulating cell movements during gastrulation. The polypeptide is Glypican-3 (GPC3) (Homo sapiens (Human)).